The primary structure comprises 446 residues: MNQLWRASCLQVLITFLLIHQNKASEKDRFVELVDCIADSFTVVLNKSDPEVMRMISNPKSQPVVYVYGHKTRHPCGTSMKDEKGLTNFNLTIPYGSECDVTLTDLPKHRYAETTVVLEDNADLSFGKTTRLNHVFCLYTRNVKTIRFSDVSNGHEVIASTGGKPKPKVEMLFRSTDSGKTLQAARENEFVEFFIALSPDSAYHGISPKECTFSDREDISAPDAKKITFVQGGCPVNGMNDIIDPLANVNDQIYFSKFRTFRFGNQSTVFVHCQVQVCLKKDECSKTCYKKVSDSNLTAERLRFRHKRSITDLERRTTRSAPTDDNGSLDLTNSLTVVSRIESAELVASPISQPTIVDTPSEQRRDPCPKSSNMGFIPLIIMGSLASLLLFSAGAAIYFGCKLKSMKKKDSFDMMSAFSNPTVSMPVTYSHYQRSAYNASVDSLYR.

Residues methionine 1–alanine 24 form the signal peptide. The ZP domain maps to aspartate 35 to serine 295. The cysteines at positions 211 and 273 are disulfide-linked. Residues isoleucine 377 to isoleucine 397 form a helical membrane-spanning segment.

In terms of assembly, monomer under reducing conditions. Homodimer under non-reducing conditions. May also form higher order oligomers. Post-translationally, proteolytically cleaved and secreted in vitro. In terms of tissue distribution, in the embryo, expressed in the excretory cell and, during dendrite formation, in the non-neuronal cells surrounding the sensory neurons, including hypodermal cells.

It is found in the cell membrane. The protein resides in the cell projection. It localises to the dendrite. The protein localises to the secreted. In terms of biological role, required for permeability of amphid and phasmid neurons to external dyes, chemotaxis to ammonium chloride, avoidance of high osmotic stimuli, male mating and dauer formation. Along with dex-1, enables neurite growth and maintenance by anchoring amphid dendritic tips during neuron cell body migration in embryonic and larval development. This Caenorhabditis elegans protein is Protein dyf-7.